The following is a 345-amino-acid chain: S-adenosylmethionine:tRNA ribosyltransferase-isomerase (345 aa).

This sequence belongs to the QueA family. In terms of assembly, monomer.

It localises to the cytoplasm. The enzyme catalyses 7-aminomethyl-7-carbaguanosine(34) in tRNA + S-adenosyl-L-methionine = epoxyqueuosine(34) in tRNA + adenine + L-methionine + 2 H(+). It functions in the pathway tRNA modification; tRNA-queuosine biosynthesis. Functionally, transfers and isomerizes the ribose moiety from AdoMet to the 7-aminomethyl group of 7-deazaguanine (preQ1-tRNA) to give epoxyqueuosine (oQ-tRNA). The protein is S-adenosylmethionine:tRNA ribosyltransferase-isomerase of Acidithiobacillus ferrooxidans (strain ATCC 53993 / BNL-5-31) (Leptospirillum ferrooxidans (ATCC 53993)).